Reading from the N-terminus, the 206-residue chain is Proteasome subunit beta 2 (206 aa).

Positions 1 to 7 are cleaved as a propeptide — removed in mature form; by autocatalysis; the sequence is MREAVSK. Thr-8 functions as the Nucleophile in the catalytic mechanism.

This sequence belongs to the peptidase T1B family. In terms of assembly, the 20S proteasome core is composed of 14 alpha and 14 beta subunits that assemble into four stacked heptameric rings, resulting in a barrel-shaped structure. The two inner rings, each composed of seven catalytic beta subunits, are sandwiched by two outer rings, each composed of seven alpha subunits. The catalytic chamber with the active sites is on the inside of the barrel. Has a gated structure, the ends of the cylinder being occluded by the N-termini of the alpha-subunits. Is capped at one or both ends by the proteasome regulatory ATPase, PAN.

The protein resides in the cytoplasm. The enzyme catalyses Cleavage of peptide bonds with very broad specificity.. With respect to regulation, the formation of the proteasomal ATPase PAN-20S proteasome complex, via the docking of the C-termini of PAN into the intersubunit pockets in the alpha-rings, triggers opening of the gate for substrate entry. Interconversion between the open-gate and close-gate conformations leads to a dynamic regulation of the 20S proteasome proteolysis activity. Its function is as follows. Component of the proteasome core, a large protease complex with broad specificity involved in protein degradation. In Desulfurococcus amylolyticus (strain DSM 18924 / JCM 16383 / VKM B-2413 / 1221n) (Desulfurococcus kamchatkensis), this protein is Proteasome subunit beta 2.